The sequence spans 87 residues: Large ribosomal subunit protein bL27 (87 aa).

Residues 1-20 form a disordered region; that stretch reads MAHKKAGGSSRNGRDSESKR.

It belongs to the bacterial ribosomal protein bL27 family.

This is Large ribosomal subunit protein bL27 from Thiobacillus denitrificans (strain ATCC 25259 / T1).